Here is a 356-residue protein sequence, read N- to C-terminus: Phospho-N-acetylmuramoyl-pentapeptide-transferase (356 aa).

10 helical membrane-spanning segments follow: residues 27–47 (AAVATAMILGLWIGPRFILML), 73–93 (TMGGLMILISLMISALLWMDL), 97–117 (FVWACLFVTAGFAVVGFLDDY), 134–154 (LLVEFLIAGVAVLLIVSRTGT), 163–183 (GIVIPLGPFYYVFAMVLIVGF), 195–215 (GLATFPVIIASLTFLVIVYLS), 232–252 (AGELAVFAAAIIGACLAFLWF), 258–278 (AVFMGDTGSLALGGALATIAV), 285–305 (VLVLVGGLFVVEALSVIIQVF), and 333–353 (TVVIRFWIVSIVLALAGLATL).

Belongs to the glycosyltransferase 4 family. MraY subfamily. Requires Mg(2+) as cofactor.

It localises to the cell inner membrane. It carries out the reaction UDP-N-acetyl-alpha-D-muramoyl-L-alanyl-gamma-D-glutamyl-meso-2,6-diaminopimeloyl-D-alanyl-D-alanine + di-trans,octa-cis-undecaprenyl phosphate = di-trans,octa-cis-undecaprenyl diphospho-N-acetyl-alpha-D-muramoyl-L-alanyl-D-glutamyl-meso-2,6-diaminopimeloyl-D-alanyl-D-alanine + UMP. It participates in cell wall biogenesis; peptidoglycan biosynthesis. In terms of biological role, catalyzes the initial step of the lipid cycle reactions in the biosynthesis of the cell wall peptidoglycan: transfers peptidoglycan precursor phospho-MurNAc-pentapeptide from UDP-MurNAc-pentapeptide onto the lipid carrier undecaprenyl phosphate, yielding undecaprenyl-pyrophosphoryl-MurNAc-pentapeptide, known as lipid I. The chain is Phospho-N-acetylmuramoyl-pentapeptide-transferase from Sphingopyxis alaskensis (strain DSM 13593 / LMG 18877 / RB2256) (Sphingomonas alaskensis).